We begin with the raw amino-acid sequence, 189 residues long: Pyridoxal 5'-phosphate synthase subunit PdxT (189 aa).

Residue 47–49 (GES) coordinates L-glutamine. The active-site Nucleophile is C79. L-glutamine is bound by residues R106 and 135 to 136 (IR). Residues H171 and E173 each act as charge relay system in the active site.

It belongs to the glutaminase PdxT/SNO family. In terms of assembly, in the presence of PdxS, forms a dodecamer of heterodimers. Only shows activity in the heterodimer.

The catalysed reaction is aldehydo-D-ribose 5-phosphate + D-glyceraldehyde 3-phosphate + L-glutamine = pyridoxal 5'-phosphate + L-glutamate + phosphate + 3 H2O + H(+). It catalyses the reaction L-glutamine + H2O = L-glutamate + NH4(+). The protein operates within cofactor biosynthesis; pyridoxal 5'-phosphate biosynthesis. Its function is as follows. Catalyzes the hydrolysis of glutamine to glutamate and ammonia as part of the biosynthesis of pyridoxal 5'-phosphate. The resulting ammonia molecule is channeled to the active site of PdxS. The sequence is that of Pyridoxal 5'-phosphate synthase subunit PdxT from Thermoanaerobacter pseudethanolicus (strain ATCC 33223 / 39E) (Clostridium thermohydrosulfuricum).